Reading from the N-terminus, the 580-residue chain is Laccase-20 (580 aa).

The signal sequence occupies residues 1–23; sequence MVASLLCTVAVAVLAVAAVGGEA. Plastocyanin-like domains lie at 31–147 and 156–310; these read VVHE…PRDG and KDVP…YTGV. N-linked (GlcNAc...) asparagine glycans are attached at residues Asn-36 and Asn-42. Residues His-81 and His-83 each contribute to the Cu cation site. An N-linked (GlcNAc...) asparagine glycan is attached at Asn-115. Positions 126 and 128 each coordinate Cu cation. 7 N-linked (GlcNAc...) asparagine glycosylation sites follow: Asn-200, Asn-339, Asn-373, Asn-392, Asn-399, Asn-429, and Asn-460. The Plastocyanin-like 3 domain maps to 419–561; sequence DFPVRPPRPY…ATAFIVEDGP (143 aa). Residues Asn-478, His-481, His-483, His-540, Cys-541, His-542, His-546, and Met-551 each coordinate Cu cation. Residues 560-580 form a disordered region; sequence GPTPETSLPPPPPEFKRCDAS.

The protein belongs to the multicopper oxidase family. It depends on Cu cation as a cofactor.

It localises to the secreted. Its subcellular location is the extracellular space. The protein resides in the apoplast. The enzyme catalyses 4 hydroquinone + O2 = 4 benzosemiquinone + 2 H2O. Its function is as follows. Lignin degradation and detoxification of lignin-derived products. This is Laccase-20 (LAC20) from Oryza sativa subsp. japonica (Rice).